A 107-amino-acid polypeptide reads, in one-letter code: UPF0145 protein BVU_2335 (107 aa).

The protein belongs to the UPF0145 family.

The protein is UPF0145 protein BVU_2335 of Phocaeicola vulgatus (strain ATCC 8482 / DSM 1447 / JCM 5826 / CCUG 4940 / NBRC 14291 / NCTC 11154) (Bacteroides vulgatus).